Here is a 63-residue protein sequence, read N- to C-terminus: Large ribosomal subunit protein bL28 (63 aa).

It belongs to the bacterial ribosomal protein bL28 family.

In Clostridium beijerinckii (strain ATCC 51743 / NCIMB 8052) (Clostridium acetobutylicum), this protein is Large ribosomal subunit protein bL28.